The sequence spans 159 residues: Immunoglobulin J chain (159 aa).

A signal peptide spans 1-21 (MKTHLLLWGVLAIFVKAVLVT). 3 cysteine pairs are disulfide-bonded: Cys34-Cys123, Cys93-Cys113, and Cys131-Cys156. Asn70 carries N-linked (GlcNAc...) (complex) asparagine glycosylation.

As to quaternary structure, part of the secretory IgA (sIgA) complex that consists of two, four or five IgA monomers, and two additional non-Ig polypeptides, namely the JCHAIN and the secretory component (the proteolytic product of PIGR). Part of the secretory IgM (sIgM) complex that consist of five IgM monomers, and two additional non-Ig polypeptides, namely the JCHAIN and the secretory component (the proteolytic product of PIGR). JCHAIN-containing IgM interacts (via CH4 domain) with FCRM (via Ig-like domain).

The protein localises to the secreted. In terms of biological role, serves to link two monomer units of either IgM or IgA. In the case of IgM, the J chain-joined dimer is a nucleating unit for the IgM pentamer, and in the case of IgA it induces dimers and/or larger polymers. It also helps to bind these immunoglobulins to secretory component. This is Immunoglobulin J chain from Mus musculus (Mouse).